The primary structure comprises 130 residues: Large ribosomal subunit protein bL12 (130 aa).

This sequence belongs to the bacterial ribosomal protein bL12 family. In terms of assembly, homodimer. Part of the ribosomal stalk of the 50S ribosomal subunit. Forms a multimeric L10(L12)X complex, where L10 forms an elongated spine to which 2 to 4 L12 dimers bind in a sequential fashion. Binds GTP-bound translation factors.

Functionally, forms part of the ribosomal stalk which helps the ribosome interact with GTP-bound translation factors. Is thus essential for accurate translation. This Chlamydia trachomatis serovar L2 (strain ATCC VR-902B / DSM 19102 / 434/Bu) protein is Large ribosomal subunit protein bL12.